The following is a 384-amino-acid chain: Odorant receptor 46a, isoform B (384 aa).

At 1–37 (MVTEDFYKYQVWYFQILGVWQLPTWAADHQRRFQSMR) the chain is on the cytoplasmic side. A helical transmembrane segment spans residues 38–58 (FGFILVILFIMLLLFSFEMLN). Residue Asn59 is glycosylated (N-linked (GlcNAc...) asparagine). The Extracellular segment spans residues 59–65 (NISQVRE). A helical membrane pass occupies residues 66–86 (ILKVFFMFATEISCMAKLLHL). Over 87-130 (KLKSRKLAGLVDAMLSPEFGVKSEQEMQMLELDRVAVVRMRNSY) the chain is Cytoplasmic. A helical transmembrane segment spans residues 131–151 (GIMSLGAASLILIVPCFDNFG). Over 152–165 (ELPLAMLEVCSIEG) the chain is Extracellular. A helical transmembrane segment spans residues 166–186 (WICYWSQYLFHSICLLPTCVL). Residues 187–247 (NITYDSVAYS…YNRIVRFKDL (61 aa)) lie on the Cytoplasmic side of the membrane. The chain crosses the membrane as a helical span at residues 248–268 (VELFIKGPGSVQLMCSVLVLV). The Extracellular segment spans residues 269 to 283 (SNLYDMSTMSIANGD). A helical transmembrane segment spans residues 284–304 (AIFMLKTCIYQLVMLWQIFII). Residues 305-348 (CYASNEVTVQSSRLCHSIYSSQWTGWNRANRRIVLLMMQRFNSP) are Cytoplasmic-facing. The helical transmembrane segment at 349–369 (MLLSTFNPTFAFSLEAFGSIV) threads the bilayer. Asn370 is a glycosylation site (N-linked (GlcNAc...) asparagine). Residues 370-384 (NCSYSYFALLKRVNS) are Extracellular-facing.

It belongs to the insect chemoreceptor superfamily. Heteromeric odorant receptor channel (TC 1.A.69) family. Or2a subfamily. As to quaternary structure, interacts with Orco. Complexes exist early in the endomembrane system in olfactory sensory neurons (OSNs), coupling these complexes to the conserved ciliary trafficking pathway. In terms of tissue distribution, isoform B is expressed in the antenna.

It is found in the cell membrane. Odorant receptor which mediates acceptance or avoidance behavior, depending on its substrates. The odorant receptor repertoire encodes a large collection of odor stimuli that vary widely in identity, intensity, and duration. May form a complex with Orco to form odorant-sensing units, providing sensitive and prolonged odorant signaling and calcium permeability. The polypeptide is Odorant receptor 46a, isoform B (Or46a) (Drosophila melanogaster (Fruit fly)).